The following is a 323-amino-acid chain: Cobalamin biosynthesis protein CobD (323 aa).

Helical transmembrane passes span 52–72 (IAGVLLLALTVTSAASVTWLM), 73–93 (VWGSARLHALAGLMVAALLSS), 154–174 (DGIIAPLFWLALGGPVAGMAF), 214–234 (ALLMVMVAPLIGLSQANAASI), and 294–314 (IRLMYATTLAMAVISLATAAL).

Belongs to the CobD/CbiB family.

The protein resides in the cell membrane. Its pathway is cofactor biosynthesis; adenosylcobalamin biosynthesis. Converts cobyric acid to cobinamide by the addition of aminopropanol on the F carboxylic group. In Pelobacter propionicus (strain DSM 2379 / NBRC 103807 / OttBd1), this protein is Cobalamin biosynthesis protein CobD.